We begin with the raw amino-acid sequence, 212 residues long: Ras-related protein Rab-2A (212 aa).

A2 carries the post-translational modification N-acetylalanine. Residues 2–19 (AYAYLFKYIIIGDTGVGK) are required for interaction with PRKCI. GTP-binding residues include G16, V17, G18, K19, S20, C21, and T38. Position 20 (S20) interacts with Mg(2+). The Switch 1 motif lies at 37–42 (LTIGVE). 2 residues coordinate Mg(2+): T38 and D61. The short motif at 63–72 (AGQESFRSIT) is the Switch 2 element. G64, N119, K120, D122, A150, and K151 together coordinate GTP. Residues 190–212 (QHAATNASHGSNQGGQQAGGGCC) form a disordered region. Gly residues predominate over residues 201–212 (NQGGQQAGGGCC). 2 S-geranylgeranyl cysteine lipidation sites follow: C211 and C212.

The protein belongs to the small GTPase superfamily. Rab family. In terms of assembly, interacts with PRKCI. Interacts with TRIP11. Interacts (in GTP-bound form) with GARIN1B. Interacts (GTP-bound) with HOPS complex component VPS39; interaction contributes to obtaining a functional HOPS complex that promotes autophagosome-lysosome membrane fusion driven by STX17-SNAP29-VAMP8. Interacts with VPS41. Mg(2+) serves as cofactor. Post-translationally, prenylated. Prenylation is required for association with cellular membranes.

Its subcellular location is the endoplasmic reticulum-Golgi intermediate compartment membrane. It is found in the melanosome. The protein localises to the endoplasmic reticulum membrane. The protein resides in the golgi apparatus membrane. It localises to the cytoplasmic vesicle. Its subcellular location is the secretory vesicle. It is found in the acrosome. The protein localises to the autophagosome membrane. It carries out the reaction GTP + H2O = GDP + phosphate + H(+). With respect to regulation, regulated by guanine nucleotide exchange factors (GEFs) which promote the exchange of bound GDP for free GTP, GTPase activating proteins (GAPs) which increase the GTP hydrolysis activity, and GDP dissociation inhibitors (GDIs) which inhibit the dissociation of the nucleotide from the GTPase. In terms of biological role, the small GTPases Rab are key regulators of intracellular membrane trafficking, from the formation of transport vesicles to their fusion with membranes. Rabs cycle between active GTP-bound and inactive GDP-bound states. In their active state, drive transport of vesicular carriers from donor organelles to acceptor organelles to regulate the membrane traffic that maintains organelle identity and morphology. RAB2A regulates autophagy by promoting autophagosome-lysosome fusion via recruitment of the HOPS endosomal tethering complex; this process involves autophagosomal RAB2A and lysosomal RAB39A recruitment of HOPS subcomplexes VPS39-VPS11 and VPS41-VPS16-VPS18-VPS33A, respectively, which assemble into a functional complex to mediate membrane tethering and SNAREs-driven membrane fusion. Required for protein transport from the endoplasmic reticulum to the Golgi complex. Regulates the compacted morphology of the Golgi. Together with RAB2B, redundantly required for efficient autophagic flux. The protein is Ras-related protein Rab-2A of Mus musculus (Mouse).